The sequence spans 115 residues: Large ribosomal subunit protein uL18 (115 aa).

Belongs to the universal ribosomal protein uL18 family. As to quaternary structure, part of the 50S ribosomal subunit; part of the 5S rRNA/L5/L18/L25 subcomplex. Contacts the 5S and 23S rRNAs.

This is one of the proteins that bind and probably mediate the attachment of the 5S RNA into the large ribosomal subunit, where it forms part of the central protuberance. The polypeptide is Large ribosomal subunit protein uL18 (Vesicomyosocius okutanii subsp. Calyptogena okutanii (strain HA)).